Consider the following 1142-residue polypeptide: Protein kinase C-like (1142 aa).

The REM-1 1 domain occupies 1 to 67 (MNDEDKVHDI…LRELQMRRLG (67 aa)). The interval 70–139 (VDNMSLGASP…PPDSNVPRAR (70 aa)) is disordered. Residues 149 to 226 (KFDTPHLGPR…LKRYEELHID (78 aa)) enclose the REM-1 2 domain. A C2 domain is found at 231–349 (GPDDDSINLP…LRRKKIEAEM (119 aa)). Positions 357–403 (ADRVGSRAPPPQFPMGAQSPQFAAPPTSPGSQEQNTMIPPQAPPPSQ) are disordered. Residues 385 to 394 (PGSQEQNTMI) are compositionally biased toward polar residues. 2 consecutive Phorbol-ester/DAG-type zinc fingers follow at residues 457-505 (GHKF…VTKC) and 525-576 (PHRF…PDFC). 2 disordered regions span residues 592 to 622 (TQKKTHKDKASSMSERTLRPGSKTSISSGSI) and 651 to 807 (SQTT…TDPG). Polar residues predominate over residues 613–622 (SKTSISSGSI). Composition is skewed to low complexity over residues 663-677 (TSTSSTTASAAAAAA), 712-724 (SAQQQQGYGSPQQ), and 741-765 (PQARPQQQQQQQQQTPQQVSPMYQQ). The Protein kinase domain maps to 817-1076 (FNFLAVLGKG…AQEIMSQPFF (260 aa)). Residues 823-831 (LGKGNFGKV) and Lys846 contribute to the ATP site. Asp942 functions as the Proton acceptor in the catalytic mechanism. In terms of domain architecture, AGC-kinase C-terminal spans 1077-1142 (RNINWDDIYH…RGFSYTADFE (66 aa)).

The protein belongs to the protein kinase superfamily. AGC Ser/Thr protein kinase family. PKC subfamily.

The catalysed reaction is L-seryl-[protein] + ATP = O-phospho-L-seryl-[protein] + ADP + H(+). The enzyme catalyses L-threonyl-[protein] + ATP = O-phospho-L-threonyl-[protein] + ADP + H(+). The protein is Protein kinase C-like of Neurospora crassa (strain ATCC 24698 / 74-OR23-1A / CBS 708.71 / DSM 1257 / FGSC 987).